The following is a 498-amino-acid chain: Lysine--tRNA ligase (498 aa).

2 residues coordinate Mg(2+): E408 and E415.

This sequence belongs to the class-II aminoacyl-tRNA synthetase family. Homodimer. Mg(2+) is required as a cofactor.

The protein resides in the cytoplasm. The catalysed reaction is tRNA(Lys) + L-lysine + ATP = L-lysyl-tRNA(Lys) + AMP + diphosphate. The polypeptide is Lysine--tRNA ligase (Listeria innocua serovar 6a (strain ATCC BAA-680 / CLIP 11262)).